Consider the following 199-residue polypeptide: Ribonuclease P protein subunit p25 (199 aa).

Residues 1 to 11 (MENFRKVRSEE) are compositionally biased toward basic and acidic residues. 2 disordered regions span residues 1 to 28 (MENF…SGPF) and 144 to 199 (LDPR…DQTA). Positions 151–166 (YQPPNPHPGPSSPPAA) are enriched in pro residues. A phosphoserine mark is found at Ser172 and Ser182.

This sequence belongs to the histone-like Alba family. In terms of assembly, component of nuclear RNase P and RNase MRP ribonucleoproteins. RNase P consists of a catalytic RNA moiety and 10 different protein chains; POP1, POP4, POP5, POP7, RPP14, RPP21, RPP25, RPP30, RPP38 and RPP40. Within the RNase P complex, POP1, POP7 and RPP25 form the 'finger' subcomplex, POP5, RPP14, RPP40 and homodimeric RPP30 form the 'palm' subcomplex, and RPP21, POP4 and RPP38 form the 'wrist' subcomplex. All subunits of the RNase P complex interact with the catalytic RNA. Several subunits of RNase P are also part of the RNase MRP complex. RNase MRP consists of a catalytic RNA moiety and about 8 protein subunits; POP1, POP7, RPP25, RPP30, RPP38, RPP40 and possibly also POP4 and POP5. POP7 forms a heterodimer with RPP25 that binds to the P3 stem loop of the catalytic RNA.

The protein localises to the nucleus. The protein resides in the nucleolus. In terms of biological role, component of ribonuclease P, a ribonucleoprotein complex that generates mature tRNA molecules by cleaving their 5'-ends. Also a component of the MRP ribonuclease complex, which cleaves pre-rRNA sequences. The protein is Ribonuclease P protein subunit p25 (RPP25) of Homo sapiens (Human).